Consider the following 269-residue polypeptide: E3 ubiquitin-protein ligase complex slx8-rfp subunit slx8 (269 aa).

The segment covering 1 to 10 (MPPAHKRDTN) has biased composition (basic and acidic residues). 2 disordered regions span residues 1 to 75 (MPPA…LNRA) and 166 to 196 (PRKQ…QVVP). Residues 60–70 (PSGTTSENESL) show a composition bias toward polar residues. The RING-type zinc-finger motif lies at 206 to 247 (CVICLDSPENLSCTPCGHIFCNFCILSALGTTAATQKCPVCR).

As to quaternary structure, part of an E3 ubiquitin complex including rfp1, rfp2 and slx8. Interacts with rfp1 and rfp2.

Its subcellular location is the nucleus. It catalyses the reaction S-ubiquitinyl-[E2 ubiquitin-conjugating enzyme]-L-cysteine + [acceptor protein]-L-lysine = [E2 ubiquitin-conjugating enzyme]-L-cysteine + N(6)-ubiquitinyl-[acceptor protein]-L-lysine.. It participates in protein modification; protein ubiquitination. Mediates ubiquitination and subsequent desumoylation/degradation of sumoylated proteins and proteins containing SUMO-like domains. Acts as a critical suppressor of gross chromosomal rearrangements (GCRs) during normal cell cycle progression. Involved in stabilizing, restarting or resolving transiently stalled replication forks. Prevents accumulation of DNA damage during cell cycle progression. In Schizosaccharomyces pombe (strain 972 / ATCC 24843) (Fission yeast), this protein is E3 ubiquitin-protein ligase complex slx8-rfp subunit slx8 (slx8).